The sequence spans 433 residues: Glutamate-1-semialdehyde 2,1-aminomutase (433 aa).

Lysine 271 carries the post-translational modification N6-(pyridoxal phosphate)lysine.

Belongs to the class-III pyridoxal-phosphate-dependent aminotransferase family. HemL subfamily. As to quaternary structure, homodimer. It depends on pyridoxal 5'-phosphate as a cofactor.

Its subcellular location is the cytoplasm. The catalysed reaction is (S)-4-amino-5-oxopentanoate = 5-aminolevulinate. It functions in the pathway porphyrin-containing compound metabolism; protoporphyrin-IX biosynthesis; 5-aminolevulinate from L-glutamyl-tRNA(Glu): step 2/2. Its pathway is porphyrin-containing compound metabolism; chlorophyll biosynthesis. The protein is Glutamate-1-semialdehyde 2,1-aminomutase of Prochlorococcus marinus (strain MIT 9215).